The sequence spans 98 residues: Co-chaperonin GroES (98 aa).

It belongs to the GroES chaperonin family. Heptamer of 7 subunits arranged in a ring. Interacts with the chaperonin GroEL.

It localises to the cytoplasm. Together with the chaperonin GroEL, plays an essential role in assisting protein folding. The GroEL-GroES system forms a nano-cage that allows encapsulation of the non-native substrate proteins and provides a physical environment optimized to promote and accelerate protein folding. GroES binds to the apical surface of the GroEL ring, thereby capping the opening of the GroEL channel. The polypeptide is Co-chaperonin GroES (Neorickettsia sennetsu (strain ATCC VR-367 / Miyayama) (Ehrlichia sennetsu)).